We begin with the raw amino-acid sequence, 200 residues long: dTTP/UTP pyrophosphatase (200 aa).

D81 functions as the Proton acceptor in the catalytic mechanism.

This sequence belongs to the Maf family. YhdE subfamily. Requires a divalent metal cation as cofactor.

The protein resides in the cytoplasm. It catalyses the reaction dTTP + H2O = dTMP + diphosphate + H(+). The catalysed reaction is UTP + H2O = UMP + diphosphate + H(+). Nucleoside triphosphate pyrophosphatase that hydrolyzes dTTP and UTP. May have a dual role in cell division arrest and in preventing the incorporation of modified nucleotides into cellular nucleic acids. In Albidiferax ferrireducens (strain ATCC BAA-621 / DSM 15236 / T118) (Rhodoferax ferrireducens), this protein is dTTP/UTP pyrophosphatase.